We begin with the raw amino-acid sequence, 249 residues long: Ubiquinone/menaquinone biosynthesis C-methyltransferase UbiE (249 aa).

S-adenosyl-L-methionine-binding positions include threonine 74, aspartate 93, and 121–122 (DA).

The protein belongs to the class I-like SAM-binding methyltransferase superfamily. MenG/UbiE family.

It carries out the reaction a 2-demethylmenaquinol + S-adenosyl-L-methionine = a menaquinol + S-adenosyl-L-homocysteine + H(+). It catalyses the reaction a 2-methoxy-6-(all-trans-polyprenyl)benzene-1,4-diol + S-adenosyl-L-methionine = a 5-methoxy-2-methyl-3-(all-trans-polyprenyl)benzene-1,4-diol + S-adenosyl-L-homocysteine + H(+). The protein operates within quinol/quinone metabolism; menaquinone biosynthesis; menaquinol from 1,4-dihydroxy-2-naphthoate: step 2/2. It participates in cofactor biosynthesis; ubiquinone biosynthesis. In terms of biological role, methyltransferase required for the conversion of demethylmenaquinol (DMKH2) to menaquinol (MKH2) and the conversion of 2-polyprenyl-6-methoxy-1,4-benzoquinol (DDMQH2) to 2-polyprenyl-3-methyl-6-methoxy-1,4-benzoquinol (DMQH2). This Acidiphilium cryptum (strain JF-5) protein is Ubiquinone/menaquinone biosynthesis C-methyltransferase UbiE.